Reading from the N-terminus, the 982-residue chain is Protein lin-10 (982 aa).

The span at 1–16 shows a compositional bias: polar residues; it reads MSSEAVAQATAATTSP. Disordered stretches follow at residues 1 to 55, 119 to 228, 269 to 327, 432 to 511, and 525 to 593; these read MSSE…MIPP, QPAL…RTDS, TVAD…STVP, FAQQ…GTDD, and QREQ…SKET. Residues 33 to 44 show a composition bias toward gly residues; it reads KGGGAGGGGGGE. Low complexity predominate over residues 119–134; that stretch reads QPALQQPRPSSQASSS. 2 stretches are compositionally biased toward polar residues: residues 143–156 and 169–190; these read RQTA…NVSP and ETSG…SSDV. Residues 211 to 228 are compositionally biased toward basic and acidic residues; that stretch reads GEEKSEEKRKLSGDRTDS. Over residues 301-318 the composition is skewed to polar residues; that stretch reads SLNQLRSSFNLPDDSTTV. 2 stretches are compositionally biased toward low complexity: residues 432–445 and 454–464; these read FAQQ…APTP and PSTSSGPSGAL. Over residues 490–501 the composition is skewed to polar residues; it reads NGTSTSTTNGAQ. A compositionally biased stretch (low complexity) spans 539-550; sequence QEAATAAQEAAE. Residues 577–593 show a composition bias toward basic and acidic residues; sequence GAERRGSVDKKKNSKET. Residues 604–788 enclose the PID domain; that stretch reads GVLFRARYLG…VLNSQELLGD (185 aa). PDZ domains are found at residues 801 to 886 and 892 to 968; these read EVVV…TVVS and EVRI…MPTS.

Interacts (via N-terminus) with egl-9 isoform e (via catalytic domain); the interaction regulates its trafficking; the interaction is direct. Interacts with rab-6.2 (in GTP-bound form). Post-translationally, phosphorylated on multiple Ser and Thr residues by cdk-5 which regulates its localization. In terms of processing, may be hydroxylated by egl-9 isoform e on multiple Pro residues which may prevent phosphorylation by cdk-5. As to expression, expressed in vulval epithelial cells and neurons.

It localises to the golgi apparatus. It is found in the golgi stack membrane. The protein localises to the trans-Golgi network membrane. Its subcellular location is the cytoplasm. The protein resides in the synapse. It localises to the perikaryon. Functionally, required specifically for the determination of 3 vulval precursor cell fates P5.p, P6.p and P7.p during late second and early third larval stages; required for basolateral localization of receptor tyrosine kinase let-23. Could have a general but redundant role in development, functioning in diverse cell lineages to control cell fates. Regulates the trafficking of the glr-1 subunit of AMPA-type glutamate receptors (AMPRs) in the ventral nerve cord. This may be partly through interacting with the small GTPase rab-6.2 in its active GTP-bound state. This is Protein lin-10 from Caenorhabditis elegans.